The sequence spans 186 residues: Der GTPase-activating protein YihI (186 aa).

The interval 39-77 is disordered; sequence LDAKAREDKKKRKHKGLASGSRHSAVEEKANKLQNEIKD. Basic and acidic residues predominate over residues 62–77; that stretch reads SAVEEKANKLQNEIKD.

Belongs to the YihI family. As to quaternary structure, interacts with Der.

In terms of biological role, a GTPase-activating protein (GAP) that modifies Der/EngA GTPase function. May play a role in ribosome biogenesis. This Haemophilus influenzae (strain 86-028NP) protein is Der GTPase-activating protein YihI.